The following is a 2109-amino-acid chain: Nonribosomal peptide synthetase sidE (2109 aa).

Positions 31-512 are adenylation 1; that stretch reads LTPPSPPCLV…QNGKVDFRAI (482 aa). The Carrier 1 domain occupies 537-613; it reads AGLSETASKI…EIADTVQLDS (77 aa). O-(pantetheine 4'-phosphoryl)serine is present on Ser-574. The interval 646–908 is condensation 1; that stretch reads DAYPVTALQE…LAVVPYAIAI (263 aa). Residues 1058-1555 form an adenylation 2 region; that stretch reads RTLNGQFEAT…GKANRKQLKA (498 aa). In terms of domain architecture, Carrier 2 spans 1584-1660; the sequence is PLASETQKVL…AMADQLKGES (77 aa). Position 1621 is an O-(pantetheine 4'-phosphoryl)serine (Ser-1621). The interval 1695–1968 is condensation 2; it reads YPCPPGQAEF…NFLPMRSKVD (274 aa).

The protein belongs to the NRP synthetase family.

Its pathway is siderophore biosynthesis. Its function is as follows. Nonribosomal peptide synthetase; part of the siderophore biosynthetic pathway. Aspergillus fumigatus produces four types of siderophores, low-molecular-mass iron chelators, including excreted fusarinine C (FsC) and triacetylfusarinine C (TAFC) for iron uptake and intacellular ferricrocin (FC) for hyphal and hydroxyferricrocin (HFC) for conidial iron distribution and storage. TAFC consists of three N(2)-acetyl-N(5)-anhydromevalonyl-N(5)-hydroxyornithine residues cyclically linked by ester bonds; FC is a cyclic hexapeptide with the structure Gly-Ser-Gly-(N(5)-acetyl-N(5)-hydroxyornithine)x3. The biosynthesis of all four siderophores depends on the hydroxylation of ornithine, catalyzed by the monooxygenase sidA. Subsequently, the pathways for biosynthesis of extra- and intracellular siderophores split. For biosynthesis of extracellular siderophores, the transacylase sidF transfers anhydromevalonyl to N(5)-hydroxyornithine. The required anhydromevalonyl-CoA moiety is derived from mevalonate by CoA ligation and dehydration catalyzed by sidI and sidH respectively. The acetylation of N(5)-hydroxyornithine for FC biosynthesis involves the constitutively expressed sidL. FC is hydroxylated to HFC by an as yet uncharacterized enzyme during conidiation. Assembly of fusarinine C (FsC) and FC is catalyzed by two different nonribosomal peptide synthetases (NRPS), sidD and sidC respectively. Subsequently, sidG catalyzes N2-acetylation of FsC for forming TAFC. Both extra- and intracellular siderophores are crucial for growth during iron limitation and virulence. The sequence is that of Nonribosomal peptide synthetase sidE from Aspergillus fumigatus (strain ATCC MYA-4609 / CBS 101355 / FGSC A1100 / Af293) (Neosartorya fumigata).